A 341-amino-acid polypeptide reads, in one-letter code: Anthranilate phosphoribosyltransferase (341 aa).

Residues Gly-82, Gly-85 to Asp-86, Thr-90, Asn-92 to Thr-95, Lys-110 to Ser-118, and Ser-122 each bind 5-phospho-alpha-D-ribose 1-diphosphate. Gly-82 is an anthranilate binding site. Mg(2+) is bound at residue Ser-94. Arg-168 is a binding site for anthranilate. 2 residues coordinate Mg(2+): Asp-227 and Glu-228.

The protein belongs to the anthranilate phosphoribosyltransferase family. Homodimer. Requires Mg(2+) as cofactor.

It carries out the reaction N-(5-phospho-beta-D-ribosyl)anthranilate + diphosphate = 5-phospho-alpha-D-ribose 1-diphosphate + anthranilate. It participates in amino-acid biosynthesis; L-tryptophan biosynthesis; L-tryptophan from chorismate: step 2/5. In terms of biological role, catalyzes the transfer of the phosphoribosyl group of 5-phosphorylribose-1-pyrophosphate (PRPP) to anthranilate to yield N-(5'-phosphoribosyl)-anthranilate (PRA). In Nitrosomonas eutropha (strain DSM 101675 / C91 / Nm57), this protein is Anthranilate phosphoribosyltransferase.